Consider the following 526-residue polypeptide: UDP-glycosyltransferase UGT5 (526 aa).

Residues 1 to 474 (MIFFYFLTLT…TAAVDMPWYQ (474 aa)) lie on the Lumenal side of the membrane. N-linked (GlcNAc...) asparagine glycosylation is found at N49, N124, and N283. A helical membrane pass occupies residues 475-495 (YLLLDVIAFLIFILVSVILII). The Cytoplasmic segment spans residues 496-526 (YYGVKISLRYLCALIFGNSSSLKPTKKVKDN).

Belongs to the UDP-glycosyltransferase family.

It is found in the microsome membrane. In terms of biological role, catalyzes the transfer of a glycosyl group from a UDP-sugar to an acceptor molecule. The sequence is that of UDP-glycosyltransferase UGT5 from Dactylopius coccus (Cochineal).